The chain runs to 453 residues: MLACLQRTQNPPGQHLACPSKSLDLRKCESVASSMHSSRYPSPAELDAYAEKVANSPLSIKIFPTNIRVPQHKHLSRTVNGYDTSGQRYSPYPQHTAGYQGLLAIVKAAVSSSAHAPAGHPKSVLKSVEGKRTKLSPATVQVGIAPYPVPSTLGPLAYPKPPEAPAPPPSLPAAATATSVIPLPGRGLPLPPSNLPSIHSILYQLNQQCQAPGAAPSACQGVAVPHPSPAKHGPVPSFPNLAYSATAGLPDCRKGTELSQGATPALTLAGATKPAGYAEGGLDYLLWPQKPPPPPPQPLRAYSSSTVAGKSQSPEICGGRAFERANGSPHNCGMGLPGSFTVGQYFAAPWNSVLVTPTSDCYNPAAAAVVTELAPGAARELAGPPGDVLSGLTSKSVCNTAVLSSSLQSLEYLINDIRPPCIKEQMLGKGYETVAVPRLLDHQHAHIRLPVYR.

Belongs to the FAM222 family.

The polypeptide is Protein FAM222A (Fam222a) (Mus musculus (Mouse)).